The primary structure comprises 217 residues: Adenylate kinase (217 aa).

10 to 15 lines the ATP pocket; that stretch reads GAGKGT. The tract at residues 30–59 is NMP; the sequence is STGDMLRAAVKAGTPLGIEAKKVMDAGGLV. AMP contacts are provided by residues T31, R36, 57–59, 85–88, and Q92; these read GLV and GFPR. The segment at 122 to 159 is LID; that stretch reads GRRAHLASGRTYHVKYNPPKVEGKDDVTGEDLVQRDDD. ATP-binding positions include R123 and 132–133; that span reads TY. Residues R156 and R167 each contribute to the AMP site. ATP is bound at residue G203.

The protein belongs to the adenylate kinase family. In terms of assembly, monomer.

It is found in the cytoplasm. It carries out the reaction AMP + ATP = 2 ADP. The protein operates within purine metabolism; AMP biosynthesis via salvage pathway; AMP from ADP: step 1/1. In terms of biological role, catalyzes the reversible transfer of the terminal phosphate group between ATP and AMP. Plays an important role in cellular energy homeostasis and in adenine nucleotide metabolism. The protein is Adenylate kinase of Azoarcus sp. (strain BH72).